Consider the following 30-residue polypeptide: Fibrinogen (30 aa).

Homodimer. In terms of tissue distribution, secreted into the hemolymph.

It localises to the secreted. Its subcellular location is the extracellular space. Functionally, clotting protein. This Panulirus interruptus (California spiny lobster) protein is Fibrinogen.